The chain runs to 108 residues: UPF0060 membrane protein YnfA (108 aa).

Residues 1–5 (MLKTT) are Periplasmic-facing. The chain crosses the membrane as a helical span at residues 6-26 (LLFFVTALCEIIGCFLPWLWL). The Cytoplasmic portion of the chain corresponds to 27–30 (KRGA). The chain crosses the membrane as a helical span at residues 31 to 51 (SVWWLLPAAASLALFVWLLTL). Residues 52–60 (HPAASGRVY) are Periplasmic-facing. Residues 61 to 81 (AAYGGVYVCTALLWLRVVDGV) traverse the membrane as a helical segment. At 82-84 (RLT) the chain is on the cytoplasmic side. Residues 85–105 (VYDWCGALIALCGMLIIVVGW) traverse the membrane as a helical segment. The Periplasmic segment spans residues 106–108 (GRT).

The protein belongs to the UPF0060 family.

The protein localises to the cell inner membrane. This Salmonella agona (strain SL483) protein is UPF0060 membrane protein YnfA.